Reading from the N-terminus, the 932-residue chain is Protein translocase subunit SecA (932 aa).

ATP is bound by residues Gln87, 105 to 109 (GEGKT), and Asp515. Zn(2+)-binding residues include Cys916, Cys918, Cys927, and His928.

This sequence belongs to the SecA family. As to quaternary structure, monomer and homodimer. Part of the essential Sec protein translocation apparatus which comprises SecA, SecYEG and auxiliary proteins SecDF-YajC and YidC. It depends on Zn(2+) as a cofactor.

It is found in the cell inner membrane. The protein resides in the cytoplasm. The catalysed reaction is ATP + H2O + cellular proteinSide 1 = ADP + phosphate + cellular proteinSide 2.. Functionally, part of the Sec protein translocase complex. Interacts with the SecYEG preprotein conducting channel. Has a central role in coupling the hydrolysis of ATP to the transfer of proteins into and across the cell membrane, serving both as a receptor for the preprotein-SecB complex and as an ATP-driven molecular motor driving the stepwise translocation of polypeptide chains across the membrane. The chain is Protein translocase subunit SecA from Burkholderia orbicola (strain MC0-3).